Here is a 397-residue protein sequence, read N- to C-terminus: DNA-directed RNA polymerase subunit Rpo1C (397 aa).

This sequence belongs to the RNA polymerase beta' chain family. Part of the RNA polymerase complex.

The protein localises to the cytoplasm. The catalysed reaction is RNA(n) + a ribonucleoside 5'-triphosphate = RNA(n+1) + diphosphate. In terms of biological role, DNA-dependent RNA polymerase (RNAP) catalyzes the transcription of DNA into RNA using the four ribonucleoside triphosphates as substrates. Forms part of the jaw domain. This Pyrococcus abyssi (strain GE5 / Orsay) protein is DNA-directed RNA polymerase subunit Rpo1C.